The chain runs to 366 residues: Mitochondrial division protein fszB (366 aa).

GTP contacts are provided by residues 70–74, 157–159, Glu-190, and Asp-238; these read GGGGN and GTG.

This sequence belongs to the FtsZ family.

The protein resides in the mitochondrion. Its function is as follows. Probably involved in mitochondrion division process. Binds to and hydrolyzes GTP. The sequence is that of Mitochondrial division protein fszB (fszB) from Dictyostelium discoideum (Social amoeba).